The following is a 122-amino-acid chain: Holo-[acyl-carrier-protein] synthase (122 aa).

2 residues coordinate Mg(2+): aspartate 8 and glutamate 52.

It belongs to the P-Pant transferase superfamily. AcpS family. Mg(2+) is required as a cofactor.

The protein localises to the cytoplasm. It carries out the reaction apo-[ACP] + CoA = holo-[ACP] + adenosine 3',5'-bisphosphate + H(+). Transfers the 4'-phosphopantetheine moiety from coenzyme A to a Ser of acyl-carrier-protein. This chain is Holo-[acyl-carrier-protein] synthase, found in Lachnoclostridium phytofermentans (strain ATCC 700394 / DSM 18823 / ISDg) (Clostridium phytofermentans).